Consider the following 184-residue polypeptide: C-phycoerythrin class 1 subunit beta (184 aa).

2 residues coordinate (2R,3E)-phycoerythrobilin: cysteine 50 and cysteine 61. Position 72 is an N4-methylasparagine (asparagine 72). Positions 82 and 165 each coordinate (2R,3E)-phycoerythrobilin.

This sequence belongs to the phycobiliprotein family. Heterodimer of an alpha and a beta chain. Contains three covalently linked bilin chromophores.

The protein localises to the cellular thylakoid membrane. In terms of biological role, light-harvesting photosynthetic bile pigment-protein from the phycobiliprotein complex. The polypeptide is C-phycoerythrin class 1 subunit beta (cpeB) (Synechococcus sp. (strain WH7803)).